Here is a 600-residue protein sequence, read N- to C-terminus: 1-deoxy-D-xylulose-5-phosphate synthase (600 aa).

Residues His-57 and 98–100 contribute to the thiamine diphosphate site; that span reads GHA. Asp-125 provides a ligand contact to Mg(2+). Thiamine diphosphate contacts are provided by residues 126–127, Asn-155, Tyr-264, and Glu-343; that span reads AS. Asn-155 lines the Mg(2+) pocket.

It belongs to the transketolase family. DXPS subfamily. Homodimer. Mg(2+) serves as cofactor. It depends on thiamine diphosphate as a cofactor.

The enzyme catalyses D-glyceraldehyde 3-phosphate + pyruvate + H(+) = 1-deoxy-D-xylulose 5-phosphate + CO2. It functions in the pathway metabolic intermediate biosynthesis; 1-deoxy-D-xylulose 5-phosphate biosynthesis; 1-deoxy-D-xylulose 5-phosphate from D-glyceraldehyde 3-phosphate and pyruvate: step 1/1. In terms of biological role, catalyzes the acyloin condensation reaction between C atoms 2 and 3 of pyruvate and glyceraldehyde 3-phosphate to yield 1-deoxy-D-xylulose-5-phosphate (DXP). The protein is 1-deoxy-D-xylulose-5-phosphate synthase of Fusobacterium nucleatum subsp. nucleatum (strain ATCC 25586 / DSM 15643 / BCRC 10681 / CIP 101130 / JCM 8532 / KCTC 2640 / LMG 13131 / VPI 4355).